An 88-amino-acid polypeptide reads, in one-letter code: ATP synthase subunit c (88 aa).

2 helical membrane-spanning segments follow: residues 10–30 (ILAA…GPGI) and 68–88 (GIYS…IRLL).

This sequence belongs to the ATPase C chain family. F-type ATPases have 2 components, F(1) - the catalytic core - and F(0) - the membrane proton channel. F(1) has five subunits: alpha(3), beta(3), gamma(1), delta(1), epsilon(1). F(0) has three main subunits: a(1), b(2) and c(10-14). The alpha and beta chains form an alternating ring which encloses part of the gamma chain. F(1) is attached to F(0) by a central stalk formed by the gamma and epsilon chains, while a peripheral stalk is formed by the delta and b chains.

It is found in the cell membrane. In terms of biological role, f(1)F(0) ATP synthase produces ATP from ADP in the presence of a proton or sodium gradient. F-type ATPases consist of two structural domains, F(1) containing the extramembraneous catalytic core and F(0) containing the membrane proton channel, linked together by a central stalk and a peripheral stalk. During catalysis, ATP synthesis in the catalytic domain of F(1) is coupled via a rotary mechanism of the central stalk subunits to proton translocation. Functionally, key component of the F(0) channel; it plays a direct role in translocation across the membrane. A homomeric c-ring of between 10-14 subunits forms the central stalk rotor element with the F(1) delta and epsilon subunits. The chain is ATP synthase subunit c from Alkaliphilus oremlandii (strain OhILAs) (Clostridium oremlandii (strain OhILAs)).